Reading from the N-terminus, the 102-residue chain is Large ribosomal subunit protein bL21 (102 aa).

The span at 79–91 (RKDSKRKKGHRQP) shows a compositional bias: basic residues. Positions 79–102 (RKDSKRKKGHRQPYTKLTIDKINA) are disordered.

Belongs to the bacterial ribosomal protein bL21 family. As to quaternary structure, part of the 50S ribosomal subunit. Contacts protein L20.

In terms of biological role, this protein binds to 23S rRNA in the presence of protein L20. In Staphylococcus saprophyticus subsp. saprophyticus (strain ATCC 15305 / DSM 20229 / NCIMB 8711 / NCTC 7292 / S-41), this protein is Large ribosomal subunit protein bL21.